The following is a 422-amino-acid chain: Glutamyl-tRNA reductase (422 aa).

Residues 50-53 (TCNR), serine 110, 115-117 (ETQ), and glutamine 121 each bind substrate. Cysteine 51 functions as the Nucleophile in the catalytic mechanism. 190-195 (GAGEMS) contributes to the NADP(+) binding site.

The protein belongs to the glutamyl-tRNA reductase family. As to quaternary structure, homodimer.

It carries out the reaction (S)-4-amino-5-oxopentanoate + tRNA(Glu) + NADP(+) = L-glutamyl-tRNA(Glu) + NADPH + H(+). Its pathway is porphyrin-containing compound metabolism; protoporphyrin-IX biosynthesis; 5-aminolevulinate from L-glutamyl-tRNA(Glu): step 1/2. Catalyzes the NADPH-dependent reduction of glutamyl-tRNA(Glu) to glutamate 1-semialdehyde (GSA). This Campylobacter fetus subsp. fetus (strain 82-40) protein is Glutamyl-tRNA reductase.